We begin with the raw amino-acid sequence, 209 residues long: Uracil phosphoribosyltransferase (209 aa).

Residues R79, R104, and 131–139 (DPMLATGNS) contribute to the 5-phospho-alpha-D-ribose 1-diphosphate site. Residues I194 and 199-201 (GDA) contribute to the uracil site. A 5-phospho-alpha-D-ribose 1-diphosphate-binding site is contributed by D200.

The protein belongs to the UPRTase family. Mg(2+) serves as cofactor.

It carries out the reaction UMP + diphosphate = 5-phospho-alpha-D-ribose 1-diphosphate + uracil. The protein operates within pyrimidine metabolism; UMP biosynthesis via salvage pathway; UMP from uracil: step 1/1. Its activity is regulated as follows. Allosterically activated by GTP. Its function is as follows. Catalyzes the conversion of uracil and 5-phospho-alpha-D-ribose 1-diphosphate (PRPP) to UMP and diphosphate. The protein is Uracil phosphoribosyltransferase of Rhizobium leguminosarum bv. trifolii (strain WSM2304).